We begin with the raw amino-acid sequence, 164 residues long: Disulfide bond formation protein B (164 aa).

At 1–9 (MTLPSARTC) the chain is on the cytoplasmic side. The chain crosses the membrane as a helical span at residues 10 to 26 (FLLGFLFCAALLAAALY). The Periplasmic segment spans residues 27-44 (FQFSGGLEPCPLCISQRI). A disulfide bridge links C36 with C39. The helical transmembrane segment at 45 to 61 (MVLAVALVFLAAAIHHP) threads the bilayer. Residues 62 to 68 (ASLGIRA) are Cytoplasmic-facing. A helical membrane pass occupies residues 69 to 85 (YALLGTAVALGGASISG). The Periplasmic segment spans residues 86-142 (RHVWLLHLPPEEVPECGPGLSYMFRNFPLGDTLKAMLSGTGDCAKVDWTFLGLSMPA). A disulfide bond links C101 and C128. The chain crosses the membrane as a helical span at residues 143-161 (WVLICFLGLGAFSLLQWWN). The Cytoplasmic portion of the chain corresponds to 162-164 (AER).

Belongs to the DsbB family.

It localises to the cell inner membrane. Its function is as follows. Required for disulfide bond formation in some periplasmic proteins. Acts by oxidizing the DsbA protein. This Methylococcus capsulatus (strain ATCC 33009 / NCIMB 11132 / Bath) protein is Disulfide bond formation protein B.